Consider the following 429-residue polypeptide: D-amino acid dehydrogenase (429 aa).

3-17 (VLILGSGVIGTTTAW) is a binding site for FAD.

It belongs to the DadA oxidoreductase family. Requires FAD as cofactor.

It carries out the reaction a D-alpha-amino acid + A + H2O = a 2-oxocarboxylate + AH2 + NH4(+). The protein operates within amino-acid degradation; D-alanine degradation; NH(3) and pyruvate from D-alanine: step 1/1. Its function is as follows. Oxidative deamination of D-amino acids. The polypeptide is D-amino acid dehydrogenase (Xanthomonas campestris pv. campestris (strain B100)).